Here is a 638-residue protein sequence, read N- to C-terminus: Growth hormone receptor (638 aa).

An N-terminal signal peptide occupies residues 1–18 (MDLWQLLLTVALAGSSDA). Residues 19 to 264 (FSGSEATPAT…SPFTCEEDFR (246 aa)) lie on the Extracellular side of the membrane. The disordered stretch occupies residues 30-51 (GRASESVQRVHPGLGTNSSGKP). N-linked (GlcNAc...) asparagine glycosylation is present at N46. 2 disulfides stabilise this stretch: C56-C66 and C101-C112. The N-linked (GlcNAc...) asparagine glycan is linked to N115. C126 and C140 are oxidised to a cystine. The region spanning 151–254 (PPIGLNWTLL…EVLYVTLPQM (104 aa)) is the Fibronectin type-III domain. N-linked (GlcNAc...) asparagine glycosylation is found at N156, N161, and N200. The WSXWS motif motif lies at 240–244 (YGEFS). The required for ADAM17-mediated proteolysis stretch occupies residues 260-262 (EED). Residues 265–288 (FPWFLIIIFGIFGLTVMLFVFIFS) traverse the membrane as a helical segment. At 289-638 (KQQRIKMLIL…STDQLNKILP (350 aa)) the chain is on the cytoplasmic side. The tract at residues 294-379 (KMLILPPVPV…HQKSLSVLAA (86 aa)) is required for JAK2 binding. The Box 1 motif signature appears at 297 to 305 (ILPPVPVPK). The UbE motif motif lies at 340–349 (DSWVEFIELD). The residue at position 341 (S341) is a Phosphoserine. Phosphotyrosine is present on Y487. The tract at residues 573 to 592 (TTTAERSGTAEDAPGSEMPV) is disordered. Position 595 is a phosphotyrosine (Y595).

This sequence belongs to the type I cytokine receptor family. Type 1 subfamily. As to quaternary structure, on growth hormone (GH) binding, forms homodimers and binds JAK2 via a box 1-containing domain. In terms of processing, the soluble form (GHBP) is produced by phorbol ester-promoted proteolytic cleavage at the cell surface (shedding) by ADAM17/TACE. Shedding is inhibited by growth hormone (GH) binding to the receptor probably due to a conformational change in GHR rendering the receptor inaccessible to ADAM17. Post-translationally, on GH binding, phosphorylated on tyrosine residues in the cytoplasmic domain by JAK2. Ubiquitinated by the ECS(SOCS2) complex following ligand-binding and phosphorylation by JAK2, leading to its degradation by the proteasome. Regulation by the ECS(SOCS2) complex acts as a negative feedback loop of growth hormone receptor signaling. Ubiquitination is not sufficient for GHR internalization.

It is found in the cell membrane. The protein resides in the secreted. Functionally, receptor for pituitary gland growth hormone involved in regulating postnatal body growth. On ligand binding, couples to, and activates the JAK2/STAT5 pathway. In terms of biological role, the soluble form acts as a reservoir of growth hormone in plasma and may be a modulator/inhibitor of GH signaling. This chain is Growth hormone receptor, found in Oryctolagus cuniculus (Rabbit).